The primary structure comprises 126 residues: Glycine cleavage system H protein (126 aa).

Positions 22-104 (VAIIGITEYA…YEKAWMVKVE (83 aa)) constitute a Lipoyl-binding domain. The residue at position 63 (lysine 63) is an N6-lipoyllysine.

This sequence belongs to the GcvH family. The glycine cleavage system is composed of four proteins: P, T, L and H. It depends on (R)-lipoate as a cofactor.

Its function is as follows. The glycine cleavage system catalyzes the degradation of glycine. The H protein shuttles the methylamine group of glycine from the P protein to the T protein. Is also involved in protein lipoylation via its role as an octanoyl/lipoyl carrier protein intermediate. This is Glycine cleavage system H protein from Staphylococcus aureus (strain USA300).